The following is a 388-amino-acid chain: Processive diacylglycerol beta-glucosyltransferase (388 aa).

It belongs to the glycosyltransferase 28 family. UgtP subfamily.

The protein localises to the cell membrane. The catalysed reaction is a 1,2-diacyl-3-O-(beta-D-glucopyranosyl)-sn-glycerol + UDP-alpha-D-glucose = a 1,2-diacyl-3-O-(beta-D-Glc-(1-&gt;6)-beta-D-Glc)-sn-glycerol + UDP + H(+). The enzyme catalyses a 1,2-diacyl-3-O-(beta-D-Glc-(1-&gt;6)-beta-D-Glc)-sn-glycerol + UDP-alpha-D-glucose = a 1,2-diacyl-3-O-(beta-D-Glc-(1-&gt;6)-beta-D-Glc-(1-&gt;6)-beta-D-Glc)-sn-glycerol + UDP + H(+). It carries out the reaction a 1,2-diacyl-sn-glycerol + UDP-alpha-D-glucose = a 1,2-diacyl-3-O-(beta-D-glucopyranosyl)-sn-glycerol + UDP + H(+). It functions in the pathway glycolipid metabolism; diglucosyl-diacylglycerol biosynthesis. Functionally, processive glucosyltransferase involved in the biosynthesis of both the bilayer- and non-bilayer-forming membrane glucolipids. Is able to successively transfer up to three glucosyl residues to diacylglycerol (DAG), thereby catalyzing the formation of beta-monoglucosyl-DAG (3-O-(beta-D-glucopyranosyl)-1,2-diacyl-sn-glycerol), beta-diglucosyl-DAG (3-O-(beta-D-glucopyranosyl-beta-(1-&gt;6)-D-glucopyranosyl)-1,2-diacyl-sn-glycerol) and beta-triglucosyl-DAG (3-O-(beta-D-glucopyranosyl-beta-(1-&gt;6)-D-glucopyranosyl-beta-(1-&gt;6)-D-glucopyranosyl)-1,2-diacyl-sn-glycerol). Beta-diglucosyl-DAG is the predominant glycolipid found in Bacillales and is also used as a membrane anchor for lipoteichoic acid (LTA). The sequence is that of Processive diacylglycerol beta-glucosyltransferase from Bacillus cereus (strain 03BB102).